Reading from the N-terminus, the 291-residue chain is GTP-binding protein RHO4 (291 aa).

Over residues 14–31 (GNESNIVSQGSPSSSNLP) the composition is skewed to polar residues. Residues 14 to 45 (GNESNIVSQGSPSSSNLPESPGTLDEKNLPRL) are disordered. 79 to 86 (GDGAVGKT) is a GTP binding site. Residues 101–109 (YIPTIFENY) carry the Effector region motif. Residues 127–131 (DTAGQ) and 185–188 (LKSD) contribute to the GTP site. The interval 250–273 (THTIKNPFKRNTTRSDIDSSTGDT) is disordered. Residues Ser264, Ser268, and Ser276 each carry the phosphoserine modification. At Cys288 the chain carries Cysteine methyl ester. Cys288 carries the S-farnesyl cysteine lipid modification. A propeptide spans 289–291 (IIM) (removed in mature form).

This sequence belongs to the small GTPase superfamily. Rho family. In terms of assembly, interacts with BEM4.

It localises to the cell membrane. It catalyses the reaction GTP + H2O = GDP + phosphate + H(+). Plays an important role in cell growth. Required to keep the uninucleated state. May be involved in the organization of the cytoskeleton which affects microtubule functions. Most likely RHO3 and RHO4 of S.cerevisiae regulate partially overlapping but different pathways. This chain is GTP-binding protein RHO4 (RHO4), found in Saccharomyces cerevisiae (strain ATCC 204508 / S288c) (Baker's yeast).